A 185-amino-acid chain; its full sequence is HTH-type transcriptional regulator SA2364 (185 aa).

Residues 6 to 66 (KENRQRIEEI…YVIQRDLDIF (61 aa)) enclose the HTH tetR-type domain. The segment at residues 29-48 (SMNRIAKELGIGMGTLYRHF) is a DNA-binding region (H-T-H motif).

This chain is HTH-type transcriptional regulator SA2364, found in Staphylococcus aureus (strain N315).